Consider the following 632-residue polypeptide: Protein NSP-INTERACTING KINASE 3 (632 aa).

Positions 1 to 25 (MEGVRFVVWRLGFLVFVWFFDISSA) are cleaved as a signal peptide. Topologically, residues 26–238 (TLSPTGVNYE…GTRTNGHHVA (213 aa)) are extracellular. The N-linked (GlcNAc...) asparagine glycan is linked to Asn96. LRR repeat units lie at residues 97 to 121 (LTYLQSVVLQNNAITGPIPETIGRL), 122 to 145 (EKLQSLDLSNNSFTGEIPASLGEL), 147 to 168 (NLNYLRLNNNSLIGTCPESLSK), and 169 to 193 (IEGLTLVDISYNNLSGSLPKVSART). Residues Asn131, Asn155, Asn181, and Asn210 are each glycosylated (N-linked (GlcNAc...) asparagine). A helical transmembrane segment spans residues 239 to 259 (LAFAASFSAAFFVFFTSGMFL). Residues 260 to 632 (WWRYRRNKQI…VEAIELSGPR (373 aa)) are Cytoplasmic-facing. A Phosphothreonine modification is found at Thr298. Positions 301–584 (FNSKNILGRG…EGDGLAERWE (284 aa)) constitute a Protein kinase domain. 307-315 (LGRGGYGIV) contributes to the ATP binding site. A Phosphothreonine modification is found at Thr324. Lys329 lines the ATP pocket. Phosphoserine occurs at positions 382 and 385. An interaction with geminivirus NSP protein region spans residues 415-495 (YLHEQCDPKI…DVFGFGILLL (81 aa)). Catalysis depends on Asp428, which acts as the Proton acceptor. 3 positions are modified to phosphothreonine: Thr461, Thr462, and Thr467. Phosphotyrosine is present on Tyr475. Phosphoserine is present on Ser477. At Thr478 the chain carries Phosphothreonine. Ser482 carries the phosphoserine modification. Residue Thr557 is modified to Phosphothreonine.

The protein belongs to the protein kinase superfamily. Ser/Thr protein kinase family. Oligomer. Interacts with geminivirus nuclear shuttle protein (NSP). Post-translationally, autophosphorylated. In terms of tissue distribution, expressed in seedlings, leaves and flowers.

The protein resides in the cell membrane. The catalysed reaction is L-seryl-[protein] + ATP = O-phospho-L-seryl-[protein] + ADP + H(+). It catalyses the reaction L-threonyl-[protein] + ATP = O-phospho-L-threonyl-[protein] + ADP + H(+). Inhibited by the viral nuclear shuttle protein (NSP) that binds to the region required for oligomerization. Functionally, involved in defense response to geminivirus infection. The sequence is that of Protein NSP-INTERACTING KINASE 3 (NIK3) from Arabidopsis thaliana (Mouse-ear cress).